The following is a 416-amino-acid chain: D-amino acid dehydrogenase (416 aa).

3–17 contacts FAD; the sequence is ITILGSGVIGVTTAY.

It belongs to the DadA oxidoreductase family. Requires FAD as cofactor.

The catalysed reaction is a D-alpha-amino acid + A + H2O = a 2-oxocarboxylate + AH2 + NH4(+). Functionally, oxidative deamination of D-amino acids. The sequence is that of D-amino acid dehydrogenase from Brucella suis biovar 1 (strain 1330).